The primary structure comprises 353 residues: Methionine import ATP-binding protein MetN (353 aa).

Residues 6–249 (LKNVDVDFPQ…PKQELTKKFV (244 aa)) enclose the ABC transporter domain. 41-48 (GFSGAGKS) is a binding site for ATP.

Belongs to the ABC transporter superfamily. Methionine importer (TC 3.A.1.24) family. The complex is composed of two ATP-binding proteins (MetN), two transmembrane proteins (MetI) and a solute-binding protein (MetQ).

The protein resides in the cell membrane. The catalysed reaction is L-methionine(out) + ATP + H2O = L-methionine(in) + ADP + phosphate + H(+). The enzyme catalyses D-methionine(out) + ATP + H2O = D-methionine(in) + ADP + phosphate + H(+). Part of the ABC transporter complex MetNIQ involved in methionine import. Responsible for energy coupling to the transport system. This chain is Methionine import ATP-binding protein MetN, found in Lactobacillus acidophilus (strain ATCC 700396 / NCK56 / N2 / NCFM).